The sequence spans 137 residues: uncharacterized protein (137 aa).

Residues 31-83 form a disordered region; that stretch reads PASPINDKEKDKAGGRLPSGSEPRARAFCEAGADGEQGDPSPADTIKANQGHI.

This is an uncharacterized protein from Homo sapiens (Human).